The chain runs to 837 residues: Striatin-interacting protein 1 (837 aa).

N-acetylmethionine is present on Met1. Disordered regions lie at residues 1–66 (MEPA…SESP) and 333–423 (AASP…KGLP). Positions 18 to 35 (PQPPPPPPPATAQPPPGA) are enriched in pro residues. Basic and acidic residues predominate over residues 47 to 60 (KAREFNRNQRKDSE). 3 positions are modified to phosphoserine: Ser59, Ser335, and Ser339. Basic and acidic residues predominate over residues 356 to 377 (KALIKQDNLDAFNERDPYKADD). Over residues 378–391 (SREEEEENDDDNSL) the composition is skewed to acidic residues. Ser788 is modified (phosphoserine). The segment at 796-837 (DNCLQSVLGQRVDLPEDFQMNYDLWLEREVFSKPISWEELLQ) is required for STRIPAK core complex formation.

The protein belongs to the STRIP family. As to quaternary structure, part of the core of STRIPAK complexes composed of PP2A catalytic and scaffolding subunits, the striatins (PP2A regulatory subunits), the striatin-associated proteins MOB4, STRIP1 and STRIP2, PDCD10 and members of the STE20 kinases, such as STK24 and STK26. The STRIPAK complex can be extended by adapter proteins such as SLMAP:SIKE1, CTTNBP2 or CTTNBP2NL. Interacts with CDC42BPB. Interacts with CTTNBP2NL.

Its subcellular location is the cytoplasm. In terms of biological role, plays a role in the regulation of cell morphology and cytoskeletal organization. Required in the cortical actin filament dynamics and cell shape. Part of the striatin-interacting phosphatase and kinase (STRIPAK) complexes. STRIPAK complexes have critical roles in protein (de)phosphorylation and are regulators of multiple signaling pathways including Hippo, MAPK, nuclear receptor and cytoskeleton remodeling. Different types of STRIPAK complexes are involved in a variety of biological processes such as cell growth, differentiation, apoptosis, metabolism and immune regulation. This Macaca fascicularis (Crab-eating macaque) protein is Striatin-interacting protein 1 (STRIP1).